We begin with the raw amino-acid sequence, 159 residues long: MKTAVHALSPDSRPETQHQTRKNEEAAPGSPTPRAGREGRKGPASILRRSPQERCGRGDEPRRTTRHVRFREPLEVAVHYIACREPTTAVQAPSRPRPRGGSLLLRLTACILLALALGMCCGQAGPMARALEDFRARLLAALLRLPLAALDCWRCLLQL.

The tract at residues 1–67 (MKTAVHALSP…GDEPRRTTRH (67 aa)) is disordered. Basic and acidic residues-rich tracts occupy residues 12–25 (SRPETQHQTRKNEE) and 50–63 (SPQERCGRGDEPRR). A helical transmembrane segment spans residues 107-124 (LTACILLALALGMCCGQA).

It is found in the cell membrane. This chain is Nutritionally-regulated adipose and cardiac-enriched protein homolog (NRAC), found in Bos taurus (Bovine).